Reading from the N-terminus, the 190-residue chain is MPTRRGCSGPCHFLASAFVLLLLPALNQSVVLPSTVPRAVQESKPLEPGPRTLSPLPPGPTAAQPRGQAQSEGAGPRGAESRNGSIPGAASEADGPEGKAGESSLGGSLAVSPNPSDKPMTQRALTVLVVVSAAVLVYFVVRTVRMRRRNRKTRRYGVLDTNIENMELTPLEQDDEDDDNTLFDANHPRR.

The N-terminal stretch at 1–29 (MPTRRGCSGPCHFLASAFVLLLLPALNQS) is a signal peptide. N-linked (GlcNAc...) asparagine glycans are attached at residues Asn27 and Asn83. Topologically, residues 30 to 123 (VVLPSTVPRA…NPSDKPMTQR (94 aa)) are extracellular. The segment at 37-119 (PRAVQESKPL…AVSPNPSDKP (83 aa)) is disordered. Residues 124 to 144 (ALTVLVVVSAAVLVYFVVRTV) traverse the membrane as a helical segment. Residues 145-190 (RMRRRNRKTRRYGVLDTNIENMELTPLEQDDEDDDNTLFDANHPRR) lie on the Cytoplasmic side of the membrane. Residues 168 to 190 (LTPLEQDDEDDDNTLFDANHPRR) form a disordered region. The span at 172 to 181 (EQDDEDDDNT) shows a compositional bias: acidic residues.

Belongs to the FAM174 family.

The protein resides in the membrane. In Rattus norvegicus (Rat), this protein is Membrane protein FAM174A (Fam174a).